Reading from the N-terminus, the 199-residue chain is Guanylate kinase (199 aa).

Residues 20 to 198 enclose the Guanylate kinase-like domain; sequence GKLIILTGPS…ALQAIEVALF (179 aa). 27–34 is a binding site for ATP; the sequence is GPSGVGKG.

The protein belongs to the guanylate kinase family.

The protein resides in the cytoplasm. It catalyses the reaction GMP + ATP = GDP + ADP. In terms of biological role, essential for recycling GMP and indirectly, cGMP. The polypeptide is Guanylate kinase (Nostoc sp. (strain PCC 7120 / SAG 25.82 / UTEX 2576)).